We begin with the raw amino-acid sequence, 428 residues long: Hydrolase acrC (428 aa).

Serine 248 is a catalytic residue.

Belongs to the AB hydrolase superfamily. FUS2 hydrolase family.

It participates in secondary metabolite biosynthesis. Its function is as follows. Hydrolase; part of the cluster that mediates the biosynthesis of acurin A, a highly reduced polyketide coupled to a serine via a peptide bond. The activities of the highly reducing polyketide synthase acrA and the nonribosomal peptide synthetase acrB are collectively responsible for the synthesis of the acurin A core structure with a heptaketide backbone produced by acrA covalently fused to a L-serine by acrB. After the formation of the PK-NRP hybrid product, it is detached from acrB by reductive release to set up the formation of the lactam ring by aldol condensation. The hydrolyase acrC then catalyzes water loss to generate a double bond in the ring. This double bond is probably reduced, which is followed by three oxidations at C-22 to generate the carboxylic acid moiety, involving probably the FAD-binding monooxygenase acrE and the cytochrome P450 monooxygenases acrD and acrF. Finally, a last methylation step performed by the O-methyltransferase acrG leads to the production of acurin A. The chain is Hydrolase acrC from Aspergillus aculeatus (strain ATCC 16872 / CBS 172.66 / WB 5094).